Reading from the N-terminus, the 751-residue chain is MFGSPKRAALAAASLLAVFGNGPSVMAQETSSNNAVVADGKTFALNGENVSYRFRVNETTGDLVSDHFGGSITGNLFPGFGAEALGGWVGLAGRFRREFPDHGRGDFRIPAVRIRQEAGYTVTDLQYQSYSVIPGKPALPGLPSTFGSEEDVTTLVVHLYDNYSSIAVDLSYSIFPKYDAIVRSANVTNKGTQNITVEALSSFSFDFPYEDLEMISLRGDWAREAHRQRRKVEYGLQGFGSSTGFSSHLHNPFLAIVHPSTTESQGEAWGFNLVYTGSFSVDVEKGSQGLTRALLGFNPSQLSWQLGAGETLTSPECVSVYSSDGIGGMSRSFHRLYRNHLIKSKFATSDRPPLLNSWEGLYFDYNESTIYRLAEESAALGVKLFVMDDGWFGDKYPRVSDNAGLGDWVPNPDRFPDGLTPLVEDVTKLKAGNSSTDLRFGLWVEPEMANPNSTLYHEHPDWVLHAGQYPRTLQRNQLVLNLALPEVQDYIIDEITNILNSSAISYVKWDFNRAMHETPSPSNDHEYILGMYRVFDTLTTRFPDVLWEGCASGGGRFDPGVLEYFPQIWTSDNTDALMRITIQLGTSLAYPPSAMGAHLSAVPNAQTGRTIPVKFRGHVAMMGGSFGLELDPAELQEDEKAEVPGLIALAEKVNPIILTGDMWRLRLPEESNWPAVLFISEDGNQAVLFYFQLGPNVNHATPWLRLQGLDPKATYSVDGNGSYSGATLMNMGLQYKFESDYDSKVVFLQKQ.

The first 27 residues, Met-1–Ala-27, serve as a signal peptide directing secretion. Residues Asn-49, Asn-57, Asn-162, Asn-186, Asn-194, Asn-366, Asn-433, Asn-452, and Asn-500 are each glycosylated (N-linked (GlcNAc...) asparagine). The Nucleophile role is filled by Asp-510. The Proton donor role is filled by Asp-572. N-linked (GlcNAc...) asparagine glycosylation is present at Asn-720.

It belongs to the glycosyl hydrolase 36 family. In terms of assembly, homotetramer. Requires Mg(2+) as cofactor. It depends on NAD(+) as a cofactor.

The protein localises to the secreted. The catalysed reaction is Hydrolysis of terminal, non-reducing alpha-D-galactose residues in alpha-D-galactosides, including galactose oligosaccharides, galactomannans and galactolipids.. Hydrolyzes a variety of simple alpha-D-galactoside as well as more complex molecules such as oligosaccharides and polysaccharides. This chain is Probable alpha-galactosidase C (aglC), found in Aspergillus oryzae (strain ATCC 42149 / RIB 40) (Yellow koji mold).